The sequence spans 189 residues: Class A basic helix-loop-helix protein 15 (189 aa).

Basic residues predominate over residues Met1–Ala12. 2 disordered regions span residues Met1–Arg85 and Thr167–Thr189. A Phosphothreonine modification is found at Thr25. A compositionally biased stretch (basic and acidic residues) spans Gly68–Arg85. Positions Gln75–Leu127 constitute a bHLH domain.

In terms of assembly, forms homodimers or heterodimers with TCF3 gene products E12 and E47. These dimers bind to the E-box site, however, heterodimer with MYOD1 does not bind target DNA. Expressed in brain, liver, spleen and skeletal muscle.

It localises to the nucleus. Functionally, plays a role in controlling the transcriptional activity of MYOD1, ensuring that expanding myoblast populations remain undifferentiated. Repression may occur through muscle-specific E-box occupancy by homodimers. May also negatively regulate bHLH-mediated transcription through an N-terminal repressor domain. Serves as a key regulator of acinar cell function, stability, and identity. Also required for normal organelle localization in exocrine cells and for mitochondrial calcium ion transport. May function as a unique regulator of gene expression in several different embryonic and postnatal cell lineages. Binds to the E-box consensus sequence 5'-CANNTG-3'. The polypeptide is Class A basic helix-loop-helix protein 15 (BHLHA15) (Homo sapiens (Human)).